Consider the following 236-residue polypeptide: Purine nucleoside phosphorylase (236 aa).

Residue H5 participates in a purine D-ribonucleoside binding. Residues G21, R25, R43, and 86–89 each bind phosphate; that span reads RYGT. Residues E163, 180 to 182, and 204 to 205 contribute to the a purine D-ribonucleoside site; these read EME and SD.

Belongs to the PNP/UDP phosphorylase family. Homohexamer; disulfide-linked. Trimer of homodimers, with three symmetric intersubunit disulfide bonds linking the dimers to one another.

The enzyme catalyses S-methyl-5'-thioadenosine + phosphate = 5-(methylsulfanyl)-alpha-D-ribose 1-phosphate + adenine. It carries out the reaction a purine D-ribonucleoside + phosphate = a purine nucleobase + alpha-D-ribose 1-phosphate. The catalysed reaction is a purine 2'-deoxy-D-ribonucleoside + phosphate = a purine nucleobase + 2-deoxy-alpha-D-ribose 1-phosphate. The protein operates within purine metabolism; purine nucleoside salvage. In terms of biological role, cleavage of guanosine or inosine to respective bases and sugar-1-phosphate molecules. Cleaves inosine, guanosine, and adenosine with a better efficiency than MTA. This is Purine nucleoside phosphorylase from Saccharolobus solfataricus (strain ATCC 35092 / DSM 1617 / JCM 11322 / P2) (Sulfolobus solfataricus).